Here is a 513-residue protein sequence, read N- to C-terminus: Protein phosphatase 1H (513 aa).

Ser-7 carries the post-translational modification Phosphoserine. The PPM-type phosphatase domain maps to 77–506 (ATGYAEVINA…DDISVYVIPL (430 aa)). The disordered stretch occupies residues 110–133 (ITSTPNRNSKRRSSLPNGEGLQLK). Residue Thr-113 is modified to Phosphothreonine. Residues Ser-123 and Ser-210 each carry the phosphoserine modification. Omega-N-methylarginine is present on Arg-212. Residue Ser-220 is modified to Phosphoserine. At Thr-223 the chain carries Phosphothreonine. Ser-421 is modified (phosphoserine).

The protein belongs to the PP2C family.

The protein localises to the nucleus. It localises to the cytoplasm. It carries out the reaction O-phospho-L-seryl-[protein] + H2O = L-seryl-[protein] + phosphate. It catalyses the reaction O-phospho-L-threonyl-[protein] + H2O = L-threonyl-[protein] + phosphate. Dephosphorylates CDKN1B at 'Thr-187', thus removing a signal for proteasomal degradation. The protein is Protein phosphatase 1H (Ppm1h) of Rattus norvegicus (Rat).